The sequence spans 736 residues: Gephyrin (736 aa).

The interval 14 to 153 (QIRVGVLTVS…LPGSKKGSQE (140 aa)) is MPT Mo-transferase. Disordered regions lie at residues 181 to 232 (DELE…DSSS) and 260 to 290 (TASLSTTPSESPRAQATSRLSTASCPTPKVQ). Residues 187 to 199 (PSPPPPLSPPPTT) show a composition bias toward pro residues. The segment covering 261–290 (ASLSTTPSESPRAQATSRLSTASCPTPKVQ) has biased composition (polar residues). The segment at 294–736 (SSKENILRAS…VVDVMVIGRL (443 aa)) is MPT adenylyltransferase.

This sequence in the N-terminal section; belongs to the MoaB/Mog family. The protein in the C-terminal section; belongs to the MoeA family. As to quaternary structure, homotrimer, homodimer and homooligomer. Interacts with glycine receptors. Requires Mg(2+) as cofactor.

Its subcellular location is the postsynaptic cell membrane. The protein resides in the cell membrane. It is found in the cytoplasm. It localises to the cytosol. The protein localises to the cytoskeleton. Its subcellular location is the cell projection. The protein resides in the dendrite. It is found in the postsynaptic density. The enzyme catalyses molybdopterin + ATP + H(+) = adenylyl-molybdopterin + diphosphate. It carries out the reaction adenylyl-molybdopterin + molybdate = Mo-molybdopterin + AMP + H(+). The protein operates within cofactor biosynthesis; molybdopterin biosynthesis. Functionally, microtubule-associated protein involved in membrane protein-cytoskeleton interactions. It is thought to anchor the inhibitory glycine receptor (GLYR) to subsynaptic microtubules. Acts as a major instructive molecule at inhibitory synapses, where it also clusters GABA type A receptors. In terms of biological role, also has a catalytic activity and catalyzes two steps in the biosynthesis of the molybdenum cofactor. In the first step, molybdopterin is adenylated. Subsequently, molybdate is inserted into adenylated molybdopterin and AMP is released. The polypeptide is Gephyrin (GPHN) (Gallus gallus (Chicken)).